Consider the following 349-residue polypeptide: uncharacterized protein (349 aa).

Position 2 is a phosphoserine (Ser-2).

This is an uncharacterized protein from Saccharomyces cerevisiae (strain ATCC 204508 / S288c) (Baker's yeast).